We begin with the raw amino-acid sequence, 183 residues long: Large ribosomal subunit protein uL22 (183 aa).

Belongs to the universal ribosomal protein uL22 family.

This is Large ribosomal subunit protein uL22 (RPL17) from Podocoryna carnea (Hydrozoan).